The primary structure comprises 218 residues: MTNLKLDVQTADGNINGSVELPAEIFDREVSVALLHQVVNAQLAAARQGTHSTKTRGEVRGGGRKPFRQKGTGRARQGSIRAPHFTGGGISHGPKPRDYSQRTPKKMIKAALYGALSDRARNARIHVVSELVPGQTPSTKSAKAFIERLTERKSVLLVVSREDINAQKSANNLPGVHILAADQLNTYDVLKSDDVVFSVEALHTFINRASGAAQEEQN.

Residues 46 to 102 form a disordered region; that stretch reads ARQGTHSTKTRGEVRGGGRKPFRQKGTGRARQGSIRAPHFTGGGISHGPKPRDYSQR. A compositionally biased stretch (basic residues) spans 62-73; that stretch reads GGRKPFRQKGTG.

This sequence belongs to the universal ribosomal protein uL4 family. Part of the 50S ribosomal subunit.

Functionally, one of the primary rRNA binding proteins, this protein initially binds near the 5'-end of the 23S rRNA. It is important during the early stages of 50S assembly. It makes multiple contacts with different domains of the 23S rRNA in the assembled 50S subunit and ribosome. Forms part of the polypeptide exit tunnel. This Corynebacterium glutamicum (strain R) protein is Large ribosomal subunit protein uL4.